We begin with the raw amino-acid sequence, 118 residues long: Holo-[acyl-carrier-protein] synthase (118 aa).

The Mg(2+) site is built by aspartate 8 and glutamate 57.

It belongs to the P-Pant transferase superfamily. AcpS family. The cofactor is Mg(2+).

Its subcellular location is the cytoplasm. It catalyses the reaction apo-[ACP] + CoA = holo-[ACP] + adenosine 3',5'-bisphosphate + H(+). Functionally, transfers the 4'-phosphopantetheine moiety from coenzyme A to a Ser of acyl-carrier-protein. The chain is Holo-[acyl-carrier-protein] synthase from Acholeplasma laidlawii (strain PG-8A).